The following is a 312-amino-acid chain: Olfactory receptor 5J2 (312 aa).

Residues 1 to 25 are Extracellular-facing; sequence MADDNFTVVTEFILLGLTDHAELKA. N-linked (GlcNAc...) asparagine glycosylation is present at N5. Residues 26–46 traverse the membrane as a helical segment; sequence VLFVVFLVIYAITLLRNLGMI. Topologically, residues 47 to 54 are cytoplasmic; it reads LLIQITSK. A helical transmembrane segment spans residues 55–75; it reads LHTPMYFLLSCLSFVDACYSS. Residues 76 to 99 are Extracellular-facing; sequence AIAPKMLVNLLVVKATISFSACMV. A disulfide bridge links C97 with C189. The chain crosses the membrane as a helical span at residues 100–120; the sequence is QHLCFGVFITTEGFLLSVMAY. The Cytoplasmic portion of the chain corresponds to 121 to 139; that stretch reads DRYVAIVSPLLYTVAMSDR. Residues 140 to 160 traverse the membrane as a helical segment; that stretch reads KCVELVTGSWIGGIVNTLIHT. Residues 161–196 lie on the Extracellular side of the membrane; the sequence is ISLRRLSFCRLNAVSHFFCDIPSLLKLSCSDTSMNE. Residues 197–217 form a helical membrane-spanning segment; the sequence is LLLLTFSGVIAMATFLTVIIS. The Cytoplasmic segment spans residues 218–237; sequence YIFIAFASLRIHSASGRQQA. The chain crosses the membrane as a helical span at residues 238-258; the sequence is FSTCASHLTAVTIFYGTLIFS. The Extracellular portion of the chain corresponds to 259–271; it reads YIQPSSQYFVEQE. Residues 272-292 traverse the membrane as a helical segment; sequence KVVSMFYTLGIPMLNLLIHSL. Topologically, residues 293–312 are cytoplasmic; the sequence is RNKDVKEAVKRAIEMKHFLC.

Belongs to the G-protein coupled receptor 1 family.

Its subcellular location is the cell membrane. Its function is as follows. Odorant receptor. In Homo sapiens (Human), this protein is Olfactory receptor 5J2 (OR5J2).